Consider the following 209-residue polypeptide: CAAX box protein 1 (209 aa).

Residues 182–209 (TAGRPPRDLSPSARPISSPPPETSCVLA) form a disordered region. Residue Cys206 is modified to Cysteine methyl ester. Cys206 carries the S-farnesyl cysteine lipid modification. Positions 207–209 (VLA) are cleaved as a propeptide — removed in mature form.

In terms of tissue distribution, ubiquitous.

Its subcellular location is the cell membrane. The protein is CAAX box protein 1 of Homo sapiens (Human).